Reading from the N-terminus, the 232-residue chain is Orotidine 5'-phosphate decarboxylase (232 aa).

Substrate contacts are provided by residues Asp-11, Lys-32, 59-68 (DLKFHDIPNT), Thr-118, Arg-180, Gln-189, Gly-209, and Arg-210. Catalysis depends on Lys-61, which acts as the Proton donor.

It belongs to the OMP decarboxylase family. Type 1 subfamily. Homodimer.

It catalyses the reaction orotidine 5'-phosphate + H(+) = UMP + CO2. Its pathway is pyrimidine metabolism; UMP biosynthesis via de novo pathway; UMP from orotate: step 2/2. Its function is as follows. Catalyzes the decarboxylation of orotidine 5'-monophosphate (OMP) to uridine 5'-monophosphate (UMP). The sequence is that of Orotidine 5'-phosphate decarboxylase from Gloeothece citriformis (strain PCC 7424) (Cyanothece sp. (strain PCC 7424)).